Here is a 125-residue protein sequence, read N- to C-terminus: Crustacean hyperglycemic hormones 5 (125 aa).

An N-terminal signal peptide occupies residues 1-34; sequence MKPGNTSFNMVSFRMVWTAMMATLLVAGASSAGT. 3 cysteine pairs are disulfide-bonded: Cys58-Cys94, Cys74-Cys90, and Cys77-Cys103. Val123 bears the Valine amide mark.

Belongs to the arthropod CHH/MIH/GIH/VIH hormone family. As to expression, produced by the medulla terminalis X-organ in the eyestalks and transported to the sinus gland where they are stored and released.

The protein localises to the secreted. In terms of biological role, hormone found in the sinus gland of isopods and decapods which controls the blood sugar level. Has a secretagogue action over the amylase released from the midgut gland. May act as a stress hormone and may be involved in the control of molting and reproduction. The polypeptide is Crustacean hyperglycemic hormones 5 (Penaeus japonicus (Kuruma prawn)).